A 254-amino-acid chain; its full sequence is Homeobox protein Nkx-6.3 (254 aa).

Disordered regions lie at residues 112-140 (QDWRGGNPALSSASNTEGSSRKKHTRPTF) and 191-228 (KSAVETPGLPSLSTRAPGDLIPSDNEDDEYSKPLDPDS). Residues 120 to 129 (ALSSASNTEG) show a composition bias toward polar residues. Positions 133 to 192 (KKHTRPTFTGHQIFALEKTFEQTKYLAGPERARLAFSLGMSESQVKVWFQNRRTKWRKKS) form a DNA-binding region, homeobox.

It localises to the nucleus. In terms of biological role, putative transcription factor, which may be involved in patterning of central nervous system and pancreas. This chain is Homeobox protein Nkx-6.3 (nkx6-3), found in Xenopus laevis (African clawed frog).